The primary structure comprises 82 residues: U-scoloptoxin(21)-Sm3a (82 aa).

Positions 1 to 21 are cleaved as a signal peptide; it reads MKIIALLLMVFLDFIIVNXAE.

The protein belongs to the scoloptoxin-21 family. In terms of tissue distribution, expressed by the venom gland.

It is found in the secreted. This chain is U-scoloptoxin(21)-Sm3a, found in Scolopendra morsitans (Tanzanian blue ringleg centipede).